Reading from the N-terminus, the 347-residue chain is Heat-inducible transcription repressor HrcA (347 aa).

It belongs to the HrcA family.

In terms of biological role, negative regulator of class I heat shock genes (grpE-dnaK-dnaJ and groELS operons). Prevents heat-shock induction of these operons. This chain is Heat-inducible transcription repressor HrcA, found in Desulforamulus reducens (strain ATCC BAA-1160 / DSM 100696 / MI-1) (Desulfotomaculum reducens).